A 199-amino-acid polypeptide reads, in one-letter code: dTTP/UTP pyrophosphatase (199 aa).

Asp-73 acts as the Proton acceptor in catalysis.

This sequence belongs to the Maf family. YhdE subfamily. A divalent metal cation serves as cofactor.

The protein resides in the cytoplasm. The catalysed reaction is dTTP + H2O = dTMP + diphosphate + H(+). It carries out the reaction UTP + H2O = UMP + diphosphate + H(+). In terms of biological role, nucleoside triphosphate pyrophosphatase that hydrolyzes dTTP and UTP. May have a dual role in cell division arrest and in preventing the incorporation of modified nucleotides into cellular nucleic acids. This chain is dTTP/UTP pyrophosphatase, found in Caldicellulosiruptor bescii (strain ATCC BAA-1888 / DSM 6725 / KCTC 15123 / Z-1320) (Anaerocellum thermophilum).